We begin with the raw amino-acid sequence, 1226 residues long: Methionine synthase (1226 aa).

Residues Lys-7–Val-327 form the Hcy-binding domain. The Zn(2+) site is built by Cys-249, Cys-312, and Cys-313. A Pterin-binding domain is found at Phe-358–Glu-619. Positions Ser-652–Ala-746 constitute a B12-binding N-terminal domain. Residues Glu-696, Gly-758–Asp-762, His-761, Ser-806, Thr-810, and Ala-862 contribute to the methylcob(III)alamin site. Positions Asn-748–Glu-883 constitute a B12-binding domain. An AdoMet activation domain is found at Lys-899–Asn-1226. S-adenosyl-L-methionine-binding positions include Asp-949, Arg-1137, and Tyr-1192–Phe-1193.

The protein belongs to the vitamin-B12 dependent methionine synthase family. The cofactor is methylcob(III)alamin. It depends on Zn(2+) as a cofactor.

It catalyses the reaction (6S)-5-methyl-5,6,7,8-tetrahydrofolate + L-homocysteine = (6S)-5,6,7,8-tetrahydrofolate + L-methionine. It participates in amino-acid biosynthesis; L-methionine biosynthesis via de novo pathway; L-methionine from L-homocysteine (MetH route): step 1/1. Its function is as follows. Catalyzes the transfer of a methyl group from methyl-cobalamin to homocysteine, yielding enzyme-bound cob(I)alamin and methionine. Subsequently, remethylates the cofactor using methyltetrahydrofolate. This chain is Methionine synthase (metH), found in Aliivibrio fischeri (strain ATCC 700601 / ES114) (Vibrio fischeri).